The chain runs to 78 residues: Large ribosomal subunit protein bL28 (78 aa).

This sequence belongs to the bacterial ribosomal protein bL28 family.

The chain is Large ribosomal subunit protein bL28 from Prochlorococcus marinus (strain MIT 9303).